The chain runs to 165 residues: UPF0114 protein in repA1-repA2 intergenic region (165 aa).

Helical transmembrane passes span 15–35 (LMFP…VKFF), 53–73 (LVLI…LVMV), and 136–156 (IMWC…MAYI).

The protein belongs to the UPF0114 family.

Its subcellular location is the cell membrane. In Buchnera aphidicola subsp. Thelaxes suberi, this protein is UPF0114 protein in repA1-repA2 intergenic region.